Consider the following 237-residue polypeptide: Arginine-binding periplasmic protein (237 aa).

Residues 1 to 18 (MKKTLLTLLFGCVVTAQA) form the signal peptide.

Belongs to the bacterial solute-binding protein 3 family.

The protein resides in the periplasm. Functionally, binds arginine; part of the arginine periplasmic transport system. The polypeptide is Arginine-binding periplasmic protein (lapT) (Mannheimia haemolytica (Pasteurella haemolytica)).